The following is a 486-amino-acid chain: Wax ester synthase/diacylglycerol acyltransferase 11 (486 aa).

Residues 1 to 192 lie on the Cytoplasmic side of the membrane; sequence MGEDKKTARE…CNSGFFNKIW (192 aa). H144 serves as the catalytic Proton acceptor. The chain crosses the membrane as a helical span at residues 193–213; sequence WLFVGLWFILRLLFNTFVDIL. Residues 214–486 lie on the Extracellular side of the membrane; that stretch reads MFALTIFVLR…LERGLYEIEV (273 aa).

In the N-terminal section; belongs to the long-chain O-acyltransferase family. Mostly expressed in inflorescences and flowers, especially at the periphery of petal epidermal cells.

The protein localises to the cell membrane. Its subcellular location is the endoplasmic reticulum membrane. The enzyme catalyses an acyl-CoA + a 1,2-diacyl-sn-glycerol = a triacyl-sn-glycerol + CoA. It carries out the reaction a long chain fatty alcohol + a fatty acyl-CoA = a wax ester + CoA. It functions in the pathway glycerolipid metabolism; triacylglycerol biosynthesis. It participates in lipid metabolism. Functionally, bifunctional wax ester synthase/diacylglycerol acyltransferase. Involved in cuticular wax biosynthesis. Required for petals development, probably by mediating the production of fatty acids at the plasma membrane in the petal epidermis acting as lubricants that makes petal elongation smooth in narrow space between the sepals and the anthers inside floral buds. In Arabidopsis thaliana (Mouse-ear cress), this protein is Wax ester synthase/diacylglycerol acyltransferase 11.